The following is a 430-amino-acid chain: Glutamate-1-semialdehyde 2,1-aminomutase 2 (430 aa).

Lysine 269 is modified (N6-(pyridoxal phosphate)lysine).

This sequence belongs to the class-III pyridoxal-phosphate-dependent aminotransferase family. HemL subfamily. As to quaternary structure, homodimer. Requires pyridoxal 5'-phosphate as cofactor.

The protein resides in the cytoplasm. The enzyme catalyses (S)-4-amino-5-oxopentanoate = 5-aminolevulinate. Its pathway is porphyrin-containing compound metabolism; protoporphyrin-IX biosynthesis; 5-aminolevulinate from L-glutamyl-tRNA(Glu): step 2/2. This Lysinibacillus sphaericus (strain C3-41) protein is Glutamate-1-semialdehyde 2,1-aminomutase 2.